The following is a 419-amino-acid chain: UDP-N-acetylglucosamine 1-carboxyvinyltransferase (419 aa).

Phosphoenolpyruvate is bound at residue 22 to 23; sequence KN. Position 91 (arginine 91) interacts with UDP-N-acetyl-alpha-D-glucosamine. Cysteine 115 acts as the Proton donor in catalysis. Position 115 is a 2-(S-cysteinyl)pyruvic acid O-phosphothioketal (cysteine 115). UDP-N-acetyl-alpha-D-glucosamine is bound by residues 120 to 124, 160 to 163, aspartate 305, and isoleucine 327; these read RPVDL and KVSV.

It belongs to the EPSP synthase family. MurA subfamily.

The protein localises to the cytoplasm. The enzyme catalyses phosphoenolpyruvate + UDP-N-acetyl-alpha-D-glucosamine = UDP-N-acetyl-3-O-(1-carboxyvinyl)-alpha-D-glucosamine + phosphate. Its pathway is cell wall biogenesis; peptidoglycan biosynthesis. Functionally, cell wall formation. Adds enolpyruvyl to UDP-N-acetylglucosamine. This chain is UDP-N-acetylglucosamine 1-carboxyvinyltransferase, found in Sodalis glossinidius (strain morsitans).